The following is a 714-amino-acid chain: Hormonally up-regulated neu tumor-associated kinase (714 aa).

Residues 1-15 (MPAAAGDGLLGEPAA) show a composition bias toward low complexity. Residues 1–26 (MPAAAGDGLLGEPAAPGGGGGAEDAA) form a disordered region. One can recognise a Protein kinase domain in the interval 62–320 (LIGSRKLGEG…IQQALANRWL (259 aa)). ATP is bound by residues 68–76 (LGEGSFAKV) and K91. The active-site Proton acceptor is D186. The span at 437–461 (KKPKEQEKRGDFLHRPFSKKLDKNL) shows a compositional bias: basic and acidic residues. Disordered stretches follow at residues 437–471 (KKPK…SGSL), 518–552 (MEFI…HKED), and 590–615 (ARRN…HTPL). Positions 599–611 (LSPGLPSGSMSPL) are enriched in low complexity.

The protein belongs to the protein kinase superfamily. CAMK Ser/Thr protein kinase family. SNF1 subfamily.

It carries out the reaction L-seryl-[protein] + ATP = O-phospho-L-seryl-[protein] + ADP + H(+). It catalyses the reaction L-threonyl-[protein] + ATP = O-phospho-L-threonyl-[protein] + ADP + H(+). In Homo sapiens (Human), this protein is Hormonally up-regulated neu tumor-associated kinase (HUNK).